A 424-amino-acid chain; its full sequence is G1/S-specific cyclin-E (424 aa).

A disordered region spans residues 1 to 25; that stretch reads MSRRSGRLQSRQDNQPLTECISDEN. The segment covering 7–17 has biased composition (polar residues); sequence RLQSRQDNQPL. Thr-411 carries the post-translational modification Phosphothreonine.

It belongs to the cyclin family. Cyclin E subfamily. In terms of assembly, interacts with a member of the CDK2/CDK protein kinases to form a serine/threonine kinase holoenzyme complex. The cyclin subunit imparts substrate specificity to the complex.

The protein localises to the nucleus. Essential for the control of the cell cycle at the G1/S (start) transition. The chain is G1/S-specific cyclin-E (CYCE) from Hemicentrotus pulcherrimus (Sea urchin).